We begin with the raw amino-acid sequence, 315 residues long: Lamassu protein LmuA (315 aa).

Component of antiviral defense system Lamassu type I, composed of LmuA and LmuB. Expression of Lamassu type I in B.subtilis (strain BEST7003) confers resistance to phages phi3T, SpBeta and SPR. The polypeptide is Lamassu protein LmuA (Bacillus sp. (strain NCIM 5461 / CCTCC AB 2011126 / NIO-1130)).